Here is a 97-residue protein sequence, read N- to C-terminus: Large ribosomal subunit protein uL23 (97 aa).

This sequence belongs to the universal ribosomal protein uL23 family. In terms of assembly, part of the 50S ribosomal subunit. Contacts protein L29, and trigger factor when it is bound to the ribosome.

In terms of biological role, one of the early assembly proteins it binds 23S rRNA. One of the proteins that surrounds the polypeptide exit tunnel on the outside of the ribosome. Forms the main docking site for trigger factor binding to the ribosome. This is Large ribosomal subunit protein uL23 from Lactococcus lactis subsp. cremoris (strain SK11).